Here is a 137-residue protein sequence, read N- to C-terminus: Ribosome-binding factor A (137 aa).

Belongs to the RbfA family. Monomer. Binds 30S ribosomal subunits, but not 50S ribosomal subunits or 70S ribosomes.

Its subcellular location is the cytoplasm. Functionally, one of several proteins that assist in the late maturation steps of the functional core of the 30S ribosomal subunit. Associates with free 30S ribosomal subunits (but not with 30S subunits that are part of 70S ribosomes or polysomes). Required for efficient processing of 16S rRNA. May interact with the 5'-terminal helix region of 16S rRNA. The protein is Ribosome-binding factor A of Shewanella amazonensis (strain ATCC BAA-1098 / SB2B).